The chain runs to 199 residues: Protein GrpE (199 aa).

A disordered region spans residues Met-1–Asp-40. A compositionally biased stretch (polar residues) spans Glu-24–Thr-36.

The protein belongs to the GrpE family. In terms of assembly, homodimer.

The protein resides in the cytoplasm. Its function is as follows. Participates actively in the response to hyperosmotic and heat shock by preventing the aggregation of stress-denatured proteins, in association with DnaK and GrpE. It is the nucleotide exchange factor for DnaK and may function as a thermosensor. Unfolded proteins bind initially to DnaJ; upon interaction with the DnaJ-bound protein, DnaK hydrolyzes its bound ATP, resulting in the formation of a stable complex. GrpE releases ADP from DnaK; ATP binding to DnaK triggers the release of the substrate protein, thus completing the reaction cycle. Several rounds of ATP-dependent interactions between DnaJ, DnaK and GrpE are required for fully efficient folding. This Geotalea uraniireducens (strain Rf4) (Geobacter uraniireducens) protein is Protein GrpE.